We begin with the raw amino-acid sequence, 533 residues long: Thromboxane-A synthase (533 aa).

Over 1 to 10 (MEALGFLKLE) the chain is Cytoplasmic. Residues 11–31 (VNGPMVTVALSVALLALLKWY) form a helical membrane-spanning segment. Residues 32 to 75 (STSAFSRLEKLGLRHPKPSPFIGNLMFFRQGFWESQMELRKLYG) lie on the Lumenal side of the membrane. A helical membrane pass occupies residues 76–96 (PLCGYYLGRRMFIVISEPDMI). At 97–223 (KQVLVENFSN…KRFFEFCIPR (127 aa)) the chain is on the cytoplasmic side. A helical transmembrane segment spans residues 224–244 (PILVLLLSFPSIMVPLARILP). The Lumenal portion of the chain corresponds to 245-335 (NKNRDELNGF…LTVDEIVGQA (91 aa)). Residues 336–356 (FIFLIAGYEIVTNTLSFATYL) form a helical membrane-spanning segment. The Cytoplasmic portion of the chain corresponds to 357 to 533 (LATNPDCQEK…NGVYIKIVSR (177 aa)). Residue C479 coordinates heme.

The protein belongs to the cytochrome P450 family. As to quaternary structure, monomer. Heme serves as cofactor.

Its subcellular location is the endoplasmic reticulum membrane. The enzyme catalyses prostaglandin H2 = thromboxane A2. It catalyses the reaction prostaglandin H2 = (12S)-hydroxy-(5Z,8E,10E)-heptadecatrienoate + malonaldehyde. It carries out the reaction a hydroperoxyeicosatetraenoate = an oxoeicosatetraenoate + H2O. The catalysed reaction is (15S)-hydroperoxy-(5Z,8Z,11Z,13E)-eicosatetraenoate = 15-oxo-(5Z,8Z,11Z,13E)-eicosatetraenoate + H2O. The enzyme catalyses (15S)-hydroperoxy-(5Z,8Z,11Z,13E)-eicosatetraenoate + AH2 = (15S)-hydroxy-(5Z,8Z,11Z,13E)-eicosatetraenoate + A + H2O. Functionally, catalyzes the conversion of prostaglandin H2 (PGH2) to thromboxane A2 (TXA2), a potent inducer of blood vessel constriction and platelet aggregation. Also cleaves PGH2 to 12-hydroxy-heptadecatrienoicacid (12-HHT) and malondialdehyde, which is known to act as a mediator of DNA damage. 12-HHT and malondialdehyde are formed stoichiometrically in the same amounts as TXA2. Additionally, displays dehydratase activity, toward (15S)-hydroperoxy-(5Z,8Z,11Z,13E)-eicosatetraenoate (15(S)-HPETE) producing 15-KETE and 15-HETE. In Macaca fascicularis (Crab-eating macaque), this protein is Thromboxane-A synthase (TBXAS1).